A 341-amino-acid polypeptide reads, in one-letter code: L-threonine 3-dehydrogenase (341 aa).

Cysteine 38 is a Zn(2+) binding site. Catalysis depends on charge relay system residues threonine 40 and histidine 43. The Zn(2+) site is built by histidine 63, glutamate 64, cysteine 93, cysteine 96, cysteine 99, and cysteine 107. Residues isoleucine 175, aspartate 195, arginine 200, 262 to 264, and 286 to 287 contribute to the NAD(+) site; these read LGI and IY.

This sequence belongs to the zinc-containing alcohol dehydrogenase family. As to quaternary structure, homotetramer. Zn(2+) serves as cofactor.

It is found in the cytoplasm. It carries out the reaction L-threonine + NAD(+) = (2S)-2-amino-3-oxobutanoate + NADH + H(+). It participates in amino-acid degradation; L-threonine degradation via oxydo-reductase pathway; glycine from L-threonine: step 1/2. Catalyzes the NAD(+)-dependent oxidation of L-threonine to 2-amino-3-ketobutyrate. The sequence is that of L-threonine 3-dehydrogenase from Serratia proteamaculans (strain 568).